The sequence spans 751 residues: Catalase-peroxidase 2 (751 aa).

The N-terminal stretch at 1-27 (MFKKTVPLLSAVAIAISFSAGTGVANA) is a signal peptide. The tryptophyl-tyrosyl-methioninium (Trp-Tyr) (with M-264) cross-link spans 115–238 (WHGAGTYRVQ…LAAVQMGLIY (124 aa)). H116 (proton acceptor) is an active-site residue. The tryptophyl-tyrosyl-methioninium (Tyr-Met) (with W-115) cross-link spans 238–264 (YVNPEGPNGKPDPLLAAKDIRDTFGRM). H279 contacts heme b.

Belongs to the peroxidase family. Peroxidase/catalase subfamily. In terms of assembly, homodimer or homotetramer. Heme b is required as a cofactor. In terms of processing, formation of the three residue Trp-Tyr-Met cross-link is important for the catalase, but not the peroxidase activity of the enzyme.

The enzyme catalyses H2O2 + AH2 = A + 2 H2O. It carries out the reaction 2 H2O2 = O2 + 2 H2O. Its function is as follows. Bifunctional enzyme with both catalase and broad-spectrum peroxidase activity. This chain is Catalase-peroxidase 2, found in Idiomarina loihiensis (strain ATCC BAA-735 / DSM 15497 / L2-TR).